Consider the following 285-residue polypeptide: MSRNLSMRAKVFLKPLVLFQIIDAYDRRPKGDNQVMGTLLGRNKEDHIEITNCFTVPHKEHSENKRIDLDMTYASEVLELNMFAYPNERVLGWFCTGKSVSRSASLIHDYYVRECGERQPLHLLVDASLKNQRLSTRLYCAVEMGVPGGTKGLMFSLVPLEISSENSDLLAMRCIEKQSQQQASKQMERFAPELVQVVDATRDIQQRLDLLLRYINDVLARKKKPDNVVGRSLQAALTAVPLLDSEKFRLMFNTNLRDMLMAITLSTMIKTQLEISEKLSCMQDQ.

The region spanning Val-11–Gly-145 is the MPN domain.

It belongs to the eIF-3 subunit F family. Component of the eukaryotic translation initiation factor 3 (eIF-3) complex. The eIF-3 complex interacts with pix.

It is found in the cytoplasm. Its function is as follows. Component of the eukaryotic translation initiation factor 3 (eIF-3) complex, which is involved in protein synthesis of a specialized repertoire of mRNAs and, together with other initiation factors, stimulates binding of mRNA and methionyl-tRNAi to the 40S ribosome. The eIF-3 complex specifically targets and initiates translation of a subset of mRNAs involved in cell proliferation. This chain is Eukaryotic translation initiation factor 3 subunit F-2, found in Drosophila simulans (Fruit fly).